The following is a 309-amino-acid chain: tRNA pseudouridine synthase B (309 aa).

Asp-39 acts as the Nucleophile in catalysis.

Belongs to the pseudouridine synthase TruB family. Type 1 subfamily.

It catalyses the reaction uridine(55) in tRNA = pseudouridine(55) in tRNA. In terms of biological role, responsible for synthesis of pseudouridine from uracil-55 in the psi GC loop of transfer RNAs. This Bacillus subtilis (strain 168) protein is tRNA pseudouridine synthase B.